Consider the following 251-residue polypeptide: Adenosylcobinamide-GDP ribazoletransferase (251 aa).

Transmembrane regions (helical) follow at residues 36 to 56, 60 to 80, 110 to 130, 141 to 161, 181 to 201, 202 to 222, and 231 to 251; these read LYPF…FVLS, VPIM…TGFL, VGAF…AGMF, ILIF…VSQE, EIIL…TLGI, NYLI…LKVK, and DVAG…LGII.

It belongs to the CobS family. It depends on Mg(2+) as a cofactor.

It is found in the cell membrane. It catalyses the reaction alpha-ribazole + adenosylcob(III)inamide-GDP = adenosylcob(III)alamin + GMP + H(+). The catalysed reaction is alpha-ribazole 5'-phosphate + adenosylcob(III)inamide-GDP = adenosylcob(III)alamin 5'-phosphate + GMP + H(+). It participates in cofactor biosynthesis; adenosylcobalamin biosynthesis; adenosylcobalamin from cob(II)yrinate a,c-diamide: step 7/7. Functionally, joins adenosylcobinamide-GDP and alpha-ribazole to generate adenosylcobalamin (Ado-cobalamin). Also synthesizes adenosylcobalamin 5'-phosphate from adenosylcobinamide-GDP and alpha-ribazole 5'-phosphate. In Clostridium perfringens (strain ATCC 13124 / DSM 756 / JCM 1290 / NCIMB 6125 / NCTC 8237 / Type A), this protein is Adenosylcobinamide-GDP ribazoletransferase.